A 281-amino-acid chain; its full sequence is Shikimate dehydrogenase (NADP(+)) (281 aa).

Residues 19–21 and T66 contribute to the shikimate site; that span reads SFS. K70 functions as the Proton acceptor in the catalytic mechanism. The shikimate site is built by N91 and D104. Residues 127–131 and I223 contribute to the NADP(+) site; that span reads GAGGA. Y225 contributes to the shikimate binding site. G246 provides a ligand contact to NADP(+).

The protein belongs to the shikimate dehydrogenase family. In terms of assembly, homodimer.

It catalyses the reaction shikimate + NADP(+) = 3-dehydroshikimate + NADPH + H(+). Its pathway is metabolic intermediate biosynthesis; chorismate biosynthesis; chorismate from D-erythrose 4-phosphate and phosphoenolpyruvate: step 4/7. Its function is as follows. Involved in the biosynthesis of the chorismate, which leads to the biosynthesis of aromatic amino acids. Catalyzes the reversible NADPH linked reduction of 3-dehydroshikimate (DHSA) to yield shikimate (SA). The sequence is that of Shikimate dehydrogenase (NADP(+)) from Methanobrevibacter smithii (strain ATCC 35061 / DSM 861 / OCM 144 / PS).